We begin with the raw amino-acid sequence, 124 residues long: Fluoride-specific ion channel FluC (124 aa).

4 helical membrane passes run 6-26 (LLIGVGGFFGAIFRYLISGIV), 37-57 (LAVNLIGSFILGFLLYCSLFA), 69-89 (TGFCGALTTFSTFSYETFVLV), and 92-112 (GLLFKALLNILINVVGCLIMV). Residues G73 and T76 each contribute to the Na(+) site.

This sequence belongs to the fluoride channel Fluc/FEX (TC 1.A.43) family.

Its subcellular location is the cell membrane. The catalysed reaction is fluoride(in) = fluoride(out). Its activity is regulated as follows. Na(+) is not transported, but it plays an essential structural role and its presence is essential for fluoride channel function. Functionally, fluoride-specific ion channel. Important for reducing fluoride concentration in the cell, thus reducing its toxicity. This Methanocaldococcus jannaschii (strain ATCC 43067 / DSM 2661 / JAL-1 / JCM 10045 / NBRC 100440) (Methanococcus jannaschii) protein is Fluoride-specific ion channel FluC.